Here is a 412-residue protein sequence, read N- to C-terminus: Intraflagellar transport protein che-13 (412 aa).

2 disordered regions span residues 1–21 (MEEEHEEESHLSQSDTVGSAI) and 162–193 (PPKEEDEDTAVDEQDEDDDNDDIVEEPMNFLD). A compositionally biased stretch (acidic residues) spans 165–193 (EEDEDTAVDEQDEDDDNDDIVEEPMNFLD). Residues 302–393 (QLASMMSKFR…VQIGVFEQSI (92 aa)) adopt a coiled-coil conformation.

It belongs to the IFT57 family. In terms of assembly, component of the IFT complex B composed of at least che-2, che-13, dyf-1, dyf-3, dyf-6, dyf-11, dyf-13, ift-20, ift-74, ift-81, ifta-2, osm-1, osm-5 and osm-6.

The protein localises to the cytoplasm. Its subcellular location is the cytoskeleton. It is found in the cilium axoneme. Component of the intraflagellar transport (IFT) complex B required for transport of proteins in the motile cilium. May be required for ciliary entrance and transport of specific ciliary cargo proteins such as che-3 which are related to motility. Required for the formation of chemosensory cilia that detect chemosensory cues. The polypeptide is Intraflagellar transport protein che-13 (Caenorhabditis elegans).